A 468-amino-acid chain; its full sequence is MSLITAGRLCARILGAKNSPCALIAARQASSSANLKDVLSDLIPKEQTRIKNFRQQYGKNVIGQITVDMMYGGMRGMKGLVYETSVLDPDEGIRFRGYSIPECQKLLPKAPGGEEPLPEGLFWLLVTGEAPSQEQVNWISKEWAKRAALPSHVVTMLDNFPTNLHPMSQLSAAITALNSESNFARGYAEGVNKTKYWELIYEDSMDLIAKLPCVAAKIYRNLYREGSSIGAIDSNLDWSHNFTNMLGYTDPQFTELMRLYLTIHSDHEGGNVSAHTSHLVGSALSDPYLSFSAAMNGLAGPLHGLANQEVLVWLTSLQKDLGGEVSDEKLRDYIWNTLNSGRVVPGYGHAVLRKTDPRYTCQREFALKHLPNDPMFKLVAQLYKIVPNVLLEQGKAKNPWPNVDAHSGVLLQYYGMKEMNYYTVLFGVSRALGVLAQLIWSRALGFPLERPKSMSTDGLMQLVGSKSG.

A mitochondrion-targeting transit peptide spans 1 to 30; sequence MSLITAGRLCARILGAKNSPCALIAARQAS. Catalysis depends on residues histidine 303 and histidine 349. Arginine 358 serves as a coordination point for oxaloacetate. Aspartate 404 is a catalytic residue. The oxaloacetate site is built by arginine 430 and arginine 450.

This sequence belongs to the citrate synthase family. In terms of assembly, homodimer.

It is found in the mitochondrion matrix. The enzyme catalyses oxaloacetate + acetyl-CoA + H2O = citrate + CoA + H(+). The protein operates within carbohydrate metabolism; tricarboxylic acid cycle; isocitrate from oxaloacetate: step 1/2. Its function is as follows. Key enzyme of the Krebs tricarboxylic acid cycle which catalyzes the synthesis of citrate from acetyl coenzyme A and oxaloacetate. This Xenopus tropicalis (Western clawed frog) protein is Citrate synthase, mitochondrial (cs).